Consider the following 479-residue polypeptide: Calcium-dependent mitochondrial ATP-magnesium/phosphate carrier protein 3 (479 aa).

The Mitochondrial intermembrane portion of the chain corresponds to 1 to 208; that stretch reads MESSKPKNRN…ISKHVKRSRL (208 aa). 4 consecutive EF-hand domains span residues 33-68, 69-104, 105-135, and 136-171; these read EREI…LQIP, PEYK…KELE, LYRI…AGIE, and IDDE…YPHE. Positions 82, 84, 86, 88, and 93 each coordinate Ca(2+). The Ca(2+) site is built by D149, D151, N153, T155, and E160. Solcar repeat units follow at residues 203 to 286, 294 to 381, and 392 to 475; these read VKRS…LKPM, IGTS…LKDL, and PGPL…MKKN. A helical membrane pass occupies residues 209–226; it reads LLAGGLAGAVSRTATAPL. Residues 227–260 lie on the Mitochondrial matrix side of the membrane; that stretch reads DRLKVVLQVQRAHAGVLPTIKKIWREDKLMGFFR. The chain crosses the membrane as a helical span at residues 261 to 280; sequence GNGLNVMKVAPESAIKFCAY. Residues 281–303 are Mitochondrial intermembrane-facing; the sequence is EMLKPMIGGEDGDIGTSGRLMAG. A helical transmembrane segment spans residues 304–317; the sequence is GMAGALAQTAIYPM. Over 318 to 355 the chain is Mitochondrial matrix; it reads DLVKTRLQTCVSEGGKAPKLWKLTKDIWVREGPRAFYK. The helical transmembrane segment at 356–375 threads the bilayer; that stretch reads GLFPSLLGIVPYAGIDLAAY. Residues 376-397 lie on the Mitochondrial intermembrane side of the membrane; the sequence is ETLKDLSRTYILQDTEPGPLIQ. Residues 398-415 traverse the membrane as a helical segment; that stretch reads LSCGMTSGALGASCVYPL. Over 416 to 449 the chain is Mitochondrial matrix; sequence QVVRTRMQADSSKTTMKQEFMNTMKGEGLRGFYR. The helical transmembrane segment at 450–469 threads the bilayer; that stretch reads GLLPNLLKVVPAASITYIVY. Topologically, residues 470 to 479 are mitochondrial intermembrane; it reads EAMKKNMALD.

It belongs to the mitochondrial carrier (TC 2.A.29) family. In terms of tissue distribution, expressed in flowers, leaves, stems, roots and seedlings, mostly in seedlings.

It localises to the mitochondrion inner membrane. Its activity is regulated as follows. Counter-exchange transport activity is saturable and inhibited by pyridoxal-5'-phosphate, EDTA and EGTA. Activated by calcium Ca(2+) and manganese Mn(2+) ions, and slightly by iron Fe(2+) and zinc Zn(2+) ions. Repressed by copper ions Cu(2+) and slightly by magnesium Mg(2+) ions. Magnesium Mg(2+) ions promotes slightly ATP uptake, ATP-Mg(2+) being exchanged with ATP(4-). Its function is as follows. Calcium-dependent mitochondrial carrier protein that catalyzes the import of ATP co-transported with metal divalent cations across the mitochondrial inner membrane in exchange for phosphate (Pi). Can transport phosphate, AMP, ADP, ATP, adenosine 5'-phosphosulfate, sulfate and thiosulfate, and, to a lesser extent, other nucleotides. Binds calcium ions Ca(2+). Also mediates calcium uptake. In Arabidopsis thaliana (Mouse-ear cress), this protein is Calcium-dependent mitochondrial ATP-magnesium/phosphate carrier protein 3.